Consider the following 437-residue polypeptide: Nicotinate phosphoribosyltransferase (437 aa).

Position 231 is a phosphohistidine; by autocatalysis (H231).

The protein belongs to the NAPRTase family. In terms of processing, transiently phosphorylated on a His residue during the reaction cycle. Phosphorylation strongly increases the affinity for substrates and increases the rate of nicotinate D-ribonucleotide production. Dephosphorylation regenerates the low-affinity form of the enzyme, leading to product release.

It carries out the reaction nicotinate + 5-phospho-alpha-D-ribose 1-diphosphate + ATP + H2O = nicotinate beta-D-ribonucleotide + ADP + phosphate + diphosphate. Its pathway is cofactor biosynthesis; NAD(+) biosynthesis; nicotinate D-ribonucleotide from nicotinate: step 1/1. Its function is as follows. Catalyzes the synthesis of beta-nicotinate D-ribonucleotide from nicotinate and 5-phospho-D-ribose 1-phosphate at the expense of ATP. This Vibrio vulnificus (strain YJ016) protein is Nicotinate phosphoribosyltransferase.